The sequence spans 639 residues: Alpha-dioxygenase 1 (639 aa).

His-163 acts as the Proton acceptor in catalysis. Asp-164 contacts Ca(2+). His-168 lines the heme b pocket. The Ca(2+) site is built by Thr-216, Trp-218, Asp-220, and Ser-222. His-389, Arg-486, and Arg-490 together coordinate heme b.

Belongs to the peroxidase family. In terms of assembly, forms monomers in solution. It depends on heme b as a cofactor. Ca(2+) serves as cofactor. In terms of tissue distribution, expressed in roots (epiderm), mature flowers (e.g. anthers) and senescing leaves.

The protein resides in the lipid droplet. It carries out the reaction a 1,2-saturated fatty acid + O2 = a (2R)-2-hydroperoxy fatty acid. The catalysed reaction is (9Z,12Z,15Z)-octadecatrienoate + O2 = (R)-2-hydroperoxy-(9Z,12Z,15Z)-octadecatrienoate. It catalyses the reaction hexadecanoate + O2 = (2R)-2-hydroperoxyhexadecanoate. The enzyme catalyses (9Z,12Z)-octadecadienoate + O2 = (2R,9Z,12Z)-2-hydroperoxyoctadecadienoate. It carries out the reaction (9Z)-octadecenoate + O2 = (2R,9Z)-2-hydroperoxyoctadecenoate. Its function is as follows. Alpha-dioxygenase that catalyzes the primary oxygenation step of a variety of 14-20 carbon fatty acids, containing up to three unsaturated bonds, into their corresponding 2R-hydroperoxides. Involved in the production of oxylipins that function in cell signaling, wound healing, and protection from infection. Mediates protection against oxidative stress and cell death, probably by generating some lipid-derived molecules. Promotes local and systemic plant defense in a salicylic acid (SA)-dependent manner, including the establishment of systemic acquired resistance (SAR) in response to incompatible interaction. Involved in a negative regulation of abscisic acid (ABA)-mediated signaling pathway. The protein is Alpha-dioxygenase 1 of Arabidopsis thaliana (Mouse-ear cress).